Reading from the N-terminus, the 137-residue chain is Small ribosomal subunit protein uS12 (137 aa).

The protein belongs to the universal ribosomal protein uS12 family. In terms of assembly, part of the 30S ribosomal subunit. Contacts proteins S8 and S17. May interact with IF1 in the 30S initiation complex.

Its function is as follows. With S4 and S5 plays an important role in translational accuracy. Interacts with and stabilizes bases of the 16S rRNA that are involved in tRNA selection in the A site and with the mRNA backbone. Located at the interface of the 30S and 50S subunits, it traverses the body of the 30S subunit contacting proteins on the other side and probably holding the rRNA structure together. The combined cluster of proteins S8, S12 and S17 appears to hold together the shoulder and platform of the 30S subunit. This Lactiplantibacillus plantarum (strain ATCC BAA-793 / NCIMB 8826 / WCFS1) (Lactobacillus plantarum) protein is Small ribosomal subunit protein uS12.